The primary structure comprises 173 residues: Mesencephalic astrocyte-derived neurotrophic factor homolog (173 aa).

An N-terminal signal peptide occupies residues 1–22 (MNTSQIVLMFCLVVGVAQTALA). 4 disulfide bridges follow: cysteine 28–cysteine 114, cysteine 31–cysteine 103, cysteine 61–cysteine 72, and cysteine 148–cysteine 151.

Belongs to the ARMET family.

It localises to the secreted. Functionally, required during the maturation of the embryonic nervous system for maintenance of neuronal and cuticular connectivity. Essential for maintenance of dopaminergic neurons and dopamine levels. The chain is Mesencephalic astrocyte-derived neurotrophic factor homolog from Drosophila grimshawi (Hawaiian fruit fly).